A 341-amino-acid polypeptide reads, in one-letter code: Cyanuric acid amidohydrolase (341 aa).

An RU A region spans residues 1–90; the sequence is MAPIEILKFP…HVTFFLRSPG (90 aa). Residues Arg-51 and 71 to 72 contribute to the substrate site; that span reads SG. The interval 95–229 is RU B; that stretch reads GLSAAVGHTR…CHILVLASTS (135 aa). Lys-144 is a catalytic residue. Substrate contacts are provided by residues Arg-176 and 212–213; that span reads SS. The Nucleophile role is filled by Ser-212. Residues 235–341 form an RU C region; sequence LHAVSRPMAD…SLCLVYETSI (107 aa). Glu-273 provides a ligand contact to Mg(2+). Substrate is bound by residues Arg-300 and 319-320; that span reads SG. Mg(2+) is bound by residues Ala-322, Gln-325, Gly-326, Pro-327, and Gly-330.

It belongs to the cyclic amide hydrolase (CyAH) family. In terms of assembly, homotetramer.

The enzyme catalyses cyanurate + H2O = 1-carboxybiuret + H(+). Its pathway is xenobiotic degradation; atrazine degradation; biuret from cyanurate: step 1/1. With respect to regulation, inhibited by barbituric acid. Responsible for the hydrolysis of cyanuric acid, an intermediate formed during catabolism of s-triazine based compounds in herbicides such as atrazine and polymers such as melamine. Catalyzes the hydrolytic opening of the s-triazine ring of cyanuric acid (2,4,6-trihydroxy-s-triazine) to yield carbon dioxide and carboxybiuret, which spontaneously decarboxylates to biuret. Only active on cyanuric acid and N-methylisocyanuric acid. The protein is Cyanuric acid amidohydrolase of Sarocladium sp.